A 173-amino-acid chain; its full sequence is Aliphatic sulfonate oxidoreductase, polyferredoxin-like subunit (173 aa).

3 4Fe-4S ferredoxin-type domains span residues 9–40 (IWILITPDKCSGCRLCEVTCSLEHEGIIWPEA), 48–80 (LFPGINVPHTCVQCPDYPCVNACPTNALSVDEK), and 82–111 (GAVVVNEEKCITCGACVLACPGKVPRIPAG). Positions 18, 21, 24, 28, 58, 61, 66, 70, 91, 94, 97, 101, 118, 121, 127, and 131 each coordinate [4Fe-4S] cluster.

Heterodimer composed of a small WOR5-S subunit, with four [4Fe-4S] clusters, and a large WOR5-L subunit, containing the active site tungsto-bispyranopterin cofactor as well as another [4Fe-4S] cluster. It depends on [4Fe-4S] cluster as a cofactor.

It is found in the cytoplasm. Functionally, polyferredoxin-like subunit of an oxidoreductase that can desulfonate and oxidize aliphatic sulfonates such as taurine. May serve as a an electron-transfer subunit between the catalytic subunit and ferredoxin. This Pyrococcus furiosus (strain ATCC 43587 / DSM 3638 / JCM 8422 / Vc1) protein is Aliphatic sulfonate oxidoreductase, polyferredoxin-like subunit.